We begin with the raw amino-acid sequence, 307 residues long: Pantothenate kinase (307 aa).

An ATP-binding site is contributed by 90–97; that stretch reads GSVAVGKS.

It belongs to the prokaryotic pantothenate kinase family.

It localises to the cytoplasm. It carries out the reaction (R)-pantothenate + ATP = (R)-4'-phosphopantothenate + ADP + H(+). It participates in cofactor biosynthesis; coenzyme A biosynthesis; CoA from (R)-pantothenate: step 1/5. The polypeptide is Pantothenate kinase (Limosilactobacillus fermentum (strain NBRC 3956 / LMG 18251) (Lactobacillus fermentum)).